We begin with the raw amino-acid sequence, 500 residues long: Lysine--tRNA ligase (500 aa).

Mg(2+) contacts are provided by glutamate 410 and glutamate 417.

The protein belongs to the class-II aminoacyl-tRNA synthetase family. As to quaternary structure, homodimer. It depends on Mg(2+) as a cofactor.

The protein resides in the cytoplasm. The enzyme catalyses tRNA(Lys) + L-lysine + ATP = L-lysyl-tRNA(Lys) + AMP + diphosphate. This Shewanella denitrificans (strain OS217 / ATCC BAA-1090 / DSM 15013) protein is Lysine--tRNA ligase.